The chain runs to 308 residues: Neurexophilin-4 (308 aa).

A signal peptide spans 1–23; it reads MRLLPEWFLLLFGPWLLRKAVSA. Positions 24–84 are II; it reads QIPESGRPQY…GALARAGAAG (61 aa). A compositionally biased stretch (low complexity) spans 40–51; sequence AAGAGAPGQQLP. The segment at 40–59 is disordered; the sequence is AAGAGAPGQQLPEPRSSDGL. N-linked (GlcNAc...) asparagine glycosylation is found at Asn72, Asn133, Asn143, and Asn149. Residues 85-163 are III; the sequence is ALPAQRTKRK…IVPPSKRVEF (79 aa). Residues 164-224 are IV (linker domain); the sequence is GGVWLPGPVP…PLGGALGVPG (61 aa). The segment at 225 to 308 is v (Cys-rich); sequence AKESRAFNCH…NFQSEHPYFG (84 aa).

It belongs to the neurexophilin family. May be proteolytically processed at the boundary between the N-terminal non-conserved and the central conserved domain in neuron-like cells. In terms of tissue distribution, expressed in brain, spleen, and testis.

It is found in the secreted. Functionally, may be signaling molecules that resemble neuropeptides and that act by binding to alpha-neurexins and possibly other receptors. This is Neurexophilin-4 (NXPH4) from Homo sapiens (Human).